A 202-amino-acid polypeptide reads, in one-letter code: LexA repressor (202 aa).

The H-T-H motif DNA-binding region spans 28–48; sequence RAEIAMRLGFRSPNAAEEHLK. Residues Ser119 and Lys156 each act as for autocatalytic cleavage activity in the active site.

It belongs to the peptidase S24 family. Homodimer.

It catalyses the reaction Hydrolysis of Ala-|-Gly bond in repressor LexA.. Its function is as follows. Represses a number of genes involved in the response to DNA damage (SOS response), including recA and lexA. Binds to the 16 bp palindromic sequence 5'-CTGTATATATATACAG-3'. In the presence of single-stranded DNA, RecA interacts with LexA causing an autocatalytic cleavage which disrupts the DNA-binding part of LexA, leading to derepression of the SOS regulon and eventually DNA repair. This chain is LexA repressor, found in Serratia proteamaculans (strain 568).